A 248-amino-acid polypeptide reads, in one-letter code: Ethylene-responsive transcription factor ERF026 (248 aa).

Residues 89-145 (VYRGIRCRSGKWVSEIREPKKTTRVWLGTYPTPEMAAAAYDVAALALKGGDTLLNFP) constitute a DNA-binding region (AP2/ERF). The tract at residues 225–248 (PPWMGSPPSDDSPENSDGESLWSY) is disordered.

This sequence belongs to the AP2/ERF transcription factor family. ERF subfamily.

It localises to the nucleus. Functionally, probably acts as a transcriptional activator. Binds to the GCC-box pathogenesis-related promoter element. May be involved in the regulation of gene expression by stress factors and by components of stress signal transduction pathways. The chain is Ethylene-responsive transcription factor ERF026 (ERF026) from Arabidopsis thaliana (Mouse-ear cress).